A 276-amino-acid polypeptide reads, in one-letter code: MGIKVYKPTTNGRRNMTGSDFAEITTSTPEKSLLVSMSKTAGRNNTGRITVRHHGGGHKRKYRMIDFKRTTDNVVAKVATIEYDPNRTANIALIVYANGVKSYILAAKGLEVGMTVVSGPDADIKVGNALPLANIPVGTLIHNIELKPGKGGQLVRSAGASAQVLGSEGKYTLVRLQSGEVRMILSTCRATIGVVGNEQQSLINLGKAGRTRHMGIRPTVRGSVMNPNDHPHGGGEGRQPVGRKSPMTPWGKPALGLKTRNKKAKSSKLIVRRIND.

The tract at residues 219–268 (TVRGSVMNPNDHPHGGGEGRQPVGRKSPMTPWGKPALGLKTRNKKAKSSK) is disordered.

This sequence belongs to the universal ribosomal protein uL2 family. As to quaternary structure, part of the 50S ribosomal subunit. Forms a bridge to the 30S subunit in the 70S ribosome.

Functionally, one of the primary rRNA binding proteins. Required for association of the 30S and 50S subunits to form the 70S ribosome, for tRNA binding and peptide bond formation. It has been suggested to have peptidyltransferase activity; this is somewhat controversial. Makes several contacts with the 16S rRNA in the 70S ribosome. This chain is Large ribosomal subunit protein uL2, found in Lactococcus lactis subsp. cremoris (strain MG1363).